The primary structure comprises 364 residues: MPDSLDQQLSSYAYHLPPERIAQAPVEPRHDARLLIAPGQTDGVQAARHQKVWDLLEELRSGDLLVVNDTRVLKARIKVRRSGGGVSELLVLEPRGDGQWLCLARPAKRMRPGDLLTLDGTAITLRVLHEDPASGGRIVQFPLDCRDAESIEALLNQCGEVPLPPYIDRHDPGDAERYQTRYADRPGAVAAPTAGLHFSDELLAALQGKGVGLARITLHVGLGTFRPVETEDLTQLELHSEWIEVNASVVEAIQQCRGRVIAVGTTSVRALEGAAQLQGGVLKPFTGPVNLVIQPGYRFAVVQGLLTNFHLPKSSLLLLVSALIGREKLLALYAEAIDHEYRFFSYGDAMWISPDAVLPGVTPN.

It belongs to the QueA family. Monomer.

Its subcellular location is the cytoplasm. It catalyses the reaction 7-aminomethyl-7-carbaguanosine(34) in tRNA + S-adenosyl-L-methionine = epoxyqueuosine(34) in tRNA + adenine + L-methionine + 2 H(+). It participates in tRNA modification; tRNA-queuosine biosynthesis. Functionally, transfers and isomerizes the ribose moiety from AdoMet to the 7-aminomethyl group of 7-deazaguanine (preQ1-tRNA) to give epoxyqueuosine (oQ-tRNA). The protein is S-adenosylmethionine:tRNA ribosyltransferase-isomerase of Synechococcus sp. (strain CC9902).